Reading from the N-terminus, the 428-residue chain is Adenylosuccinate synthetase (428 aa).

GTP-binding positions include 12–18 (GDEGKGK) and 40–42 (GHT). D13 serves as the catalytic Proton acceptor. Residues D13 and G40 each contribute to the Mg(2+) site. Residues 13–16 (DEGK), 38–41 (NAGH), T128, R142, Q223, T238, and R302 each bind IMP. The Proton donor role is filled by H41. Substrate is bound at residue 298–304 (VTTGRPR). Residues R304, 330 to 332 (KLD), and 412 to 414 (GTG) contribute to the GTP site.

It belongs to the adenylosuccinate synthetase family. As to quaternary structure, homodimer. It depends on Mg(2+) as a cofactor.

It is found in the cytoplasm. The enzyme catalyses IMP + L-aspartate + GTP = N(6)-(1,2-dicarboxyethyl)-AMP + GDP + phosphate + 2 H(+). It functions in the pathway purine metabolism; AMP biosynthesis via de novo pathway; AMP from IMP: step 1/2. In terms of biological role, plays an important role in the de novo pathway of purine nucleotide biosynthesis. Catalyzes the first committed step in the biosynthesis of AMP from IMP. The protein is Adenylosuccinate synthetase of Bifidobacterium animalis subsp. lactis (strain AD011).